A 789-amino-acid polypeptide reads, in one-letter code: Probable 3-hydroxyacyl-CoA dehydrogenase (789 aa).

Belongs to the 3-hydroxyacyl-CoA dehydrogenase family.

It carries out the reaction a (3S)-3-hydroxyacyl-CoA + NAD(+) = a 3-oxoacyl-CoA + NADH + H(+). Its pathway is lipid metabolism; fatty acid beta-oxidation. In terms of biological role, involved in the degradation of long-chain fatty acids. This chain is Probable 3-hydroxyacyl-CoA dehydrogenase (fadN), found in Bacillus subtilis (strain 168).